We begin with the raw amino-acid sequence, 717 residues long: Epithelial splicing regulatory protein 2 (717 aa).

Residues 1-14 are compositionally biased toward pro residues; it reads MTPPPPPPPPPGPD. The segment at 1–23 is disordered; sequence MTPPPPPPPPPGPDPAVDSATDP. Phosphoserine is present on Ser-83. RRM domains follow at residues 247–343, 348–428, and 465–545; these read TVVR…RFLS, VILR…RSTA, and DCVR…PCST. A Phosphoserine modification is found at Ser-563.

The protein belongs to the ESRP family. As to quaternary structure, interacts with RBPMS. Epithelial cell-specific.

Its subcellular location is the nucleus. MRNA splicing factor that regulates the formation of epithelial cell-specific isoforms. Specifically regulates the expression of FGFR2-IIIb, an epithelial cell-specific isoform of FGFR2. Also regulates the splicing of CD44, CTNND1, ENAH, 3 transcripts that undergo changes in splicing during the epithelial-to-mesenchymal transition (EMT). Acts by directly binding specific sequences in mRNAs. Binds the GU-rich sequence motifs in the ISE/ISS-3, a cis-element regulatory region present in the mRNA of FGFR2. The polypeptide is Epithelial splicing regulatory protein 2 (Esrp2) (Mus musculus (Mouse)).